The primary structure comprises 427 residues: Chaperone SurA (427 aa).

The signal sequence occupies residues 1–13; sequence MLGVALLSGAVHA. PpiC domains lie at 164-265 and 275-374; these read SEEY…KLEE and RDEV…EVLG.

It is found in the periplasm. It catalyses the reaction [protein]-peptidylproline (omega=180) = [protein]-peptidylproline (omega=0). Its function is as follows. Chaperone involved in the correct folding and assembly of outer membrane proteins. Recognizes specific patterns of aromatic residues and the orientation of their side chains, which are found more frequently in integral outer membrane proteins. May act in both early periplasmic and late outer membrane-associated steps of protein maturation. This chain is Chaperone SurA, found in Pseudomonas putida (strain ATCC 47054 / DSM 6125 / CFBP 8728 / NCIMB 11950 / KT2440).